Consider the following 491-residue polypeptide: Probable glycine dehydrogenase (decarboxylating) subunit 2 (491 aa).

Lysine 273 carries the post-translational modification N6-(pyridoxal phosphate)lysine.

The protein belongs to the GcvP family. C-terminal subunit subfamily. As to quaternary structure, the glycine cleavage system is composed of four proteins: P, T, L and H. In this organism, the P 'protein' is a heterodimer of two subunits. It depends on pyridoxal 5'-phosphate as a cofactor.

The catalysed reaction is N(6)-[(R)-lipoyl]-L-lysyl-[glycine-cleavage complex H protein] + glycine + H(+) = N(6)-[(R)-S(8)-aminomethyldihydrolipoyl]-L-lysyl-[glycine-cleavage complex H protein] + CO2. Functionally, the glycine cleavage system catalyzes the degradation of glycine. The P protein binds the alpha-amino group of glycine through its pyridoxal phosphate cofactor; CO(2) is released and the remaining methylamine moiety is then transferred to the lipoamide cofactor of the H protein. The chain is Probable glycine dehydrogenase (decarboxylating) subunit 2 from Bacillus cereus (strain ATCC 10987 / NRS 248).